Reading from the N-terminus, the 332-residue chain is 5-formaminoimidazole-4-carboxamide-1-(beta)-D-ribofuranosyl 5'-monophosphate synthetase (332 aa).

His9 and Ser72 together coordinate 5-amino-1-(5-phospho-beta-D-ribosyl)imidazole-4-carboxamide. Positions 93 to 323 constitute an ATP-grasp domain; the sequence is RNLFPWESNQ…IGREINLAIQ (231 aa). ATP is bound by residues 123-183 and Glu205; that span reads PEDV…IPMY. Position 229 (Asn229) interacts with 5-amino-1-(5-phospho-beta-D-ribosyl)imidazole-4-carboxamide. 2 residues coordinate Mg(2+): Glu268 and Glu281.

This sequence belongs to the phosphohexose mutase family. Requires Mg(2+) as cofactor. It depends on Mn(2+) as a cofactor.

It catalyses the reaction 5-amino-1-(5-phospho-beta-D-ribosyl)imidazole-4-carboxamide + formate + ATP = 5-formamido-1-(5-phospho-D-ribosyl)imidazole-4-carboxamide + ADP + phosphate. It functions in the pathway purine metabolism; IMP biosynthesis via de novo pathway; 5-formamido-1-(5-phospho-D-ribosyl)imidazole-4-carboxamide from 5-amino-1-(5-phospho-D-ribosyl)imidazole-4-carboxamide (formate route): step 1/1. Catalyzes the ATP- and formate-dependent formylation of 5-aminoimidazole-4-carboxamide-1-beta-d-ribofuranosyl 5'-monophosphate (AICAR) to 5-formaminoimidazole-4-carboxamide-1-beta-d-ribofuranosyl 5'-monophosphate (FAICAR) in the absence of folates. This Metallosphaera sedula (strain ATCC 51363 / DSM 5348 / JCM 9185 / NBRC 15509 / TH2) protein is 5-formaminoimidazole-4-carboxamide-1-(beta)-D-ribofuranosyl 5'-monophosphate synthetase.